A 179-amino-acid polypeptide reads, in one-letter code: Large ribosomal subunit protein uL6 (179 aa).

The protein belongs to the universal ribosomal protein uL6 family. In terms of assembly, part of the 50S ribosomal subunit.

Functionally, this protein binds to the 23S rRNA, and is important in its secondary structure. It is located near the subunit interface in the base of the L7/L12 stalk, and near the tRNA binding site of the peptidyltransferase center. This Syntrophus aciditrophicus (strain SB) protein is Large ribosomal subunit protein uL6.